The sequence spans 333 residues: UPF0285 protein MTH_1441 (333 aa).

Belongs to the UPF0285 family.

This is UPF0285 protein MTH_1441 from Methanothermobacter thermautotrophicus (strain ATCC 29096 / DSM 1053 / JCM 10044 / NBRC 100330 / Delta H) (Methanobacterium thermoautotrophicum).